Reading from the N-terminus, the 1513-residue chain is Lid2 complex component lid2 (1513 aa).

One can recognise a JmjN domain in the interval 56 to 97 (GLSVQLNASNMTDPFKFLLDNWHTIFKNGAIKLLPPEGWQIP). In terms of domain architecture, ARID spans 121–212 (YEKNYDYFKK…YIKPFERDSS (92 aa)). The tract at residues 211–253 (SSPSFKSKRSESSTRKIRNTRSSAQQESPIPETSAQSPVQTIQ) is disordered. Residues 230 to 253 (TRSSAQQESPIPETSAQSPVQTIQ) show a composition bias toward polar residues. The PHD-type 1 zinc finger occupies 268–318 (GEQCEYCGLDKNPETILLCDGCEAAYHTSCLDPPLTSIPKEDWYCDACKFN). One can recognise a JmjC domain in the interval 408 to 574 (KYSSEPWNLH…DGLLNSSISV (167 aa)). Serine 722 is subject to Phosphoserine. Residues 1063–1086 (LSLNDRPGPPMEPASRETSPDSEG) form a disordered region. The segment covering 1076–1086 (ASRETSPDSEG) has biased composition (basic and acidic residues). Residues 1093–1145 (KKGCIFCFCRLPESGVMIECEICHEWYHAKCLKMSKKKLRQDEKFTCPICDYR) form a PHD-type 2 zinc finger. Residues 1096-1143 (CIFCFCRLPESGVMIECEICHEWYHAKCLKMSKKKLRQDEKFTCPICD) form an RING-type 1; degenerate zinc finger. Disordered stretches follow at residues 1244-1268 (APNP…RQRQ) and 1280-1327 (ASAI…NNKN). Residues 1257–1268 (TRKPRPTKRQRQ) are compositionally biased toward basic residues. Positions 1301–1313 (VEAETKSKSEKSP) are enriched in basic and acidic residues. The segment covering 1316–1326 (NGTNISDANNK) has biased composition (polar residues). The PHD-type 3 zinc finger occupies 1352–1403 (NSSCLCGEEFSPRDSFIDCTICERRFHYDCVGLNNEIADSVSKFTCPICMEQ). The RING-type 2; degenerate zinc-finger motif lies at 1354-1401 (SCLCGEEFSPRDSFIDCTICERRFHYDCVGLNNEIADSVSKFTCPICM).

As to quaternary structure, component of the Lid2 complex composed of ash2, jmj3, lid2, sdc1 and snt2.

Its subcellular location is the nucleus. In Schizosaccharomyces pombe (strain 972 / ATCC 24843) (Fission yeast), this protein is Lid2 complex component lid2 (lid2).